The primary structure comprises 1093 residues: Probable cellulose synthase A catalytic subunit 3 [UDP-forming] (1093 aa).

Residues 1–280 are Cytoplasmic-facing; it reads MEASAGLVAG…PSSQINPYRM (280 aa). Residues Cys39, Cys42, Cys58, Cys61, Cys66, Cys69, Cys81, and Cys84 each coordinate Zn(2+). Residues 39-85 form an RING-type; degenerate zinc finger; it reads CQICGDDVGLNPDGEPFVACNECAFPVCRDCYEYERREGTQNCPQCK. Basic and acidic residues predominate over residues 233–246; it reads LHQMRNDGGGKDWD. Positions 233–257 are disordered; that stretch reads LHQMRNDGGGKDWDGDGDDGDLPLM. A helical transmembrane segment spans residues 281–301; that stretch reads VIIIRLVVLGFFFHYRVMHPV. Topologically, residues 302–303 are extracellular; it reads PD. Residues 304 to 324 traverse the membrane as a helical segment; it reads AFALWLISVICEIWFAMSWIL. Topologically, residues 325–869 are cytoplasmic; sequence DQFPKWFPIE…CLERFSYINS (545 aa). Ser363, Lys369, Glu370, and Asp399 together coordinate UDP-alpha-D-glucose. The active site involves Asp399. Residues 453–480 are a coiled coil; it reads VRERRAMKREYEEFKVRINALVAKAQKV. UDP-alpha-D-glucose is bound at residue Lys540. Mn(2+) contacts are provided by Lys541 and Asp565. Residue Asp793 is part of the active site. Residues 870–890 traverse the membrane as a helical segment; the sequence is IVYPFTSIPLLAYCTLPAICL. At 891 to 902 the chain is on the extracellular side; the sequence is LTGKFITPELTN. The chain crosses the membrane as a helical span at residues 903-923; the sequence is VASLWFMSLFICIFATGILEM. The Cytoplasmic segment spans residues 924–939; that stretch reads RWSGVGIDDWWRNEQF. Residues 940–960 traverse the membrane as a helical segment; sequence WVIGGVSSHLFALFQGLLKVI. At 961-988 the chain is on the extracellular side; the sequence is AGIDTSFTVTSKGGDDEEFSELYTFKWT. Residues 989 to 1009 traverse the membrane as a helical segment; that stretch reads TLLIPPTTLLLLNFIGVVAGV. The Cytoplasmic segment spans residues 1010–1020; that stretch reads SNAINNGYESW. Residues 1021–1041 form a helical membrane-spanning segment; it reads GPLFGKLFFAFWVIVHLYPFL. Over 1042 to 1050 the chain is Extracellular; that stretch reads KGLVGRQNR. A helical transmembrane segment spans residues 1051 to 1071; sequence TPTIVIVWSILLASIFSLLWV. Residues 1072-1093 lie on the Cytoplasmic side of the membrane; it reads RIDPFLAKNDGPLLEECGLDCN.

It belongs to the glycosyltransferase 2 family. Plant cellulose synthase subfamily. Requires Mn(2+) as cofactor. Zn(2+) serves as cofactor.

Its subcellular location is the cell membrane. The catalysed reaction is [(1-&gt;4)-beta-D-glucosyl](n) + UDP-alpha-D-glucose = [(1-&gt;4)-beta-D-glucosyl](n+1) + UDP + H(+). Its pathway is glycan metabolism; plant cellulose biosynthesis. Probable catalytic subunit of cellulose synthase terminal complexes ('rosettes'), required for beta-1,4-glucan microfibril crystallization, a major mechanism of the cell wall formation. This is Probable cellulose synthase A catalytic subunit 3 [UDP-forming] (CESA3) from Oryza sativa subsp. japonica (Rice).